Consider the following 212-residue polypeptide: UPF0319 protein PBPRA2789 (212 aa).

The first 21 residues, 1 to 21, serve as a signal peptide directing secretion; the sequence is MKKILLAFTLPLVLASQTAMA.

This sequence belongs to the UPF0319 family.

The protein is UPF0319 protein PBPRA2789 of Photobacterium profundum (strain SS9).